The chain runs to 552 residues: Cilia- and flagella- associated protein 210 (552 aa).

Coiled coils occupy residues 53–143 (DEWK…NAKQ), 186–307 (EEQL…KKRL), 348–409 (IARD…VMKA), and 460–488 (TEAL…TTNK). Residues 216–238 (KDHLKQIKEHEEEEERRKKYEEK) are disordered.

In terms of assembly, microtubule inner protein component of sperm flagellar doublet microtubules. In terms of tissue distribution, expressed in airway epithelial cells.

The protein localises to the cytoplasm. It localises to the cytoskeleton. Its subcellular location is the cilium axoneme. It is found in the flagellum axoneme. Microtubule inner protein (MIP) part of the dynein-decorated doublet microtubules (DMTs) in cilia axoneme, which is required for motile cilia beating. The chain is Cilia- and flagella- associated protein 210 from Homo sapiens (Human).